Consider the following 781-residue polypeptide: Poly(ADP-ribose) glycohydrolase 1 (781 aa).

Disordered regions lie at residues 28-87 (AHQV…VSEN), 102-131 (SLDNVTERSEHTLDNHKSTEPMEEDVNNKS), and 206-232 (ADSTFVGEDSKNQRQSGTTSDEVDADS). Residues 106 to 121 (VTERSEHTLDNHKSTE) show a composition bias toward basic and acidic residues.

It belongs to the poly(ADP-ribose) glycohydrolase family. In terms of tissue distribution, expressed in head and tail neurons. Also detected in the central nerve cord and motor neurons.

It is found in the nucleus. The enzyme catalyses [(1''-&gt;2')-ADP-alpha-D-ribose](n) + H2O = [(1''-&gt;2')-ADP-alpha-D-ribose](n-1) + ADP-D-ribose. In terms of biological role, poly(ADP-ribose) synthesized after DNA damage is only present transiently and is rapidly degraded by poly(ADP-ribose) glycohydrolase. Poly(ADP-ribose) metabolism may be required for maintenance of the normal function of neuronal cells. This chain is Poly(ADP-ribose) glycohydrolase 1, found in Caenorhabditis elegans.